Here is a 76-residue protein sequence, read N- to C-terminus: Probable insulin-like peptide alpha-type 3 (76 aa).

The first 18 residues, 1–18 (MFVLLIILSIILAQVTDA), serve as a signal peptide directing secretion. 3 cysteine pairs are disulfide-bonded: C28–C58, C40–C71, and C46–C72.

The protein belongs to the insulin family.

It localises to the secreted. This is Probable insulin-like peptide alpha-type 3 (ins-23) from Caenorhabditis elegans.